Reading from the N-terminus, the 272-residue chain is 3-hydroxyanthranilate 3,4-dioxygenase (272 aa).

The interval 1–154 (MMEWIDENSS…SEEHKTGKPS (154 aa)) is domain A (catalytic). Residue arginine 38 participates in O2 binding. Histidine 42, glutamate 48, and histidine 86 together coordinate Fe cation. Glutamate 48 serves as a coordination point for substrate. Residues arginine 90 and glutamate 100 each contribute to the substrate site. The interval 155–169 (KESSCSINVDTETEL) is linker. A domain B region spans residues 170 to 272 (MEPFPLKQWL…SITVDSLANK (103 aa)).

It belongs to the 3-HAO family. Fe(2+) is required as a cofactor.

The protein localises to the cytoplasm. It carries out the reaction 3-hydroxyanthranilate + O2 = (2Z,4Z)-2-amino-3-carboxymuconate 6-semialdehyde. It participates in cofactor biosynthesis; NAD(+) biosynthesis; quinolinate from L-kynurenine: step 3/3. In terms of biological role, catalyzes the oxidative ring opening of 3-hydroxyanthranilate to 2-amino-3-carboxymuconate semialdehyde, which spontaneously cyclizes to quinolinate. This is 3-hydroxyanthranilate 3,4-dioxygenase from Nematostella vectensis (Starlet sea anemone).